We begin with the raw amino-acid sequence, 493 residues long: Tripartite motif-containing protein 5 (493 aa).

A2 is modified (N-acetylalanine). The RING-type zinc finger occupies 15 to 59 (CPICLELLTQPLSLDCGHSFCQACLTANHKKSMLDKGESSCPVCR). A Phosphoserine modification is found at S86. The B box-type zinc finger occupies 90–132 (QKVDHCARHGEKLLLFCQEDGKVICWLCERSQEHRGHHTFLTE). Residues C95, H98, C117, and H123 each coordinate Zn(2+). Residues 131–240 (TEEVAREYQV…LISDLERRLQ (110 aa)) are a coiled coil. The interval 185–198 (FEQLRDILDWEESN) is required for interaction with GABARAP and for autophagy. In terms of domain architecture, B30.2/SPRY spans 281 to 493 (LKGMLEVFRE…VPMTLCSPSS (213 aa)).

The protein belongs to the TRIM/RBCC family. In terms of assembly, can form homodimers and homotrimers. In addition to lower-order dimerization, also exhibits a higher-order multimerization and both low- and high-order multimerizations are essential for its restriction activity. Interacts with BTBD1 and BTBD2. Interacts with PSMC4, PSMC5, PSMD7 and HSPA8/HSC70. Interacts (via B30.2/SPRY domain) with HSPA1A/B. Interacts with PSMC2, MAP3K7/TAK1, TAB2 and TAB3. Interacts with SQSTM1. Interacts with TRIM6 and TRIM34. Interacts with ULK1 (phosphorylated form), GABARAP, GABARAPL1, GABARAPL2, MAP1LC3A, MAP1LC3C and BECN1. Post-translationally, degraded in a proteasome-independent fashion in the absence of viral infection but in a proteasome-dependent fashion following exposure to restriction sensitive virus. Autoubiquitinated in a RING finger- and UBE2D2-dependent manner. Monoubiquitinated by TRIM21. Deubiquitinated by Yersinia YopJ. Ubiquitination may not lead to proteasomal degradation.

Its subcellular location is the cytoplasm. It localises to the nucleus. The catalysed reaction is S-ubiquitinyl-[E2 ubiquitin-conjugating enzyme]-L-cysteine + [acceptor protein]-L-lysine = [E2 ubiquitin-conjugating enzyme]-L-cysteine + N(6)-ubiquitinyl-[acceptor protein]-L-lysine.. Its pathway is protein modification; protein ubiquitination. Capsid-specific restriction factor that prevents infection from non-host-adapted retroviruses. Blocks viral replication early in the life cycle, after viral entry but before reverse transcription. In addition to acting as a capsid-specific restriction factor, also acts as a pattern recognition receptor that activates innate immune signaling in response to the retroviral capsid lattice. Binding to the viral capsid triggers its E3 ubiquitin ligase activity, and in concert with the heterodimeric ubiquitin conjugating enzyme complex UBE2V1-UBE2N (also known as UBC13-UEV1A complex) generates 'Lys-63'-linked polyubiquitin chains, which in turn are catalysts in the autophosphorylation of the MAP3K7/TAK1 complex (includes TAK1, TAB2, and TAB3). Activation of the MAP3K7/TAK1 complex by autophosphorylation results in the induction and expression of NF-kappa-B and MAPK-responsive inflammatory genes, thereby leading to an innate immune response in the infected cell. Plays a role in regulating autophagy through activation of autophagy regulator BECN1 by causing its dissociation from its inhibitors BCL2 and TAB2. The sequence is that of Tripartite motif-containing protein 5 (TRIM5) from Pan paniscus (Pygmy chimpanzee).